Consider the following 365-residue polypeptide: MPKPAIKTAAKPATSPAGKRAKPNTPQSVAKLKASTAKAASKPKAKLGEKKTLHPRNVHLHGYDFVALMASFPKLKAFVRPTAYGALSIDFADPLAVKNLNAALLKQHYQIDFWDIPKGALCPPIPGRVDYVHYLADLLFEGATAPRVEQVCALDIGTGANGIYAILGQQVYGWQFVASDINPQSLANVQRIIDNNSCLQGHVTLRRQRDENAIFKGIIEAADRFELTLCNPPFHASLREASEGSQRKVRNLQLSRGEKPKATGASLNFGGQAAELWCQGGEKQFLATMIRESHMFAEQCLWFTSLVSKQENLKPCYQALAKLGVDTVKTIEMQQGNKVTRVLAWSFHSQAKRLRWRSELVTPTE.

2 stretches are compositionally biased toward low complexity: residues 1–18 (MPKPAIKTAAKPATSPAG) and 30–42 (AKLKASTAKAASK). Residues 1–50 (MPKPAIKTAAKPATSPAGKRAKPNTPQSVAKLKASTAKAASKPKAKLGEK) form a disordered region.

It belongs to the methyltransferase superfamily. METTL16/RlmF family.

The protein resides in the cytoplasm. The enzyme catalyses adenosine(1618) in 23S rRNA + S-adenosyl-L-methionine = N(6)-methyladenosine(1618) in 23S rRNA + S-adenosyl-L-homocysteine + H(+). Specifically methylates the adenine in position 1618 of 23S rRNA. This chain is Ribosomal RNA large subunit methyltransferase F, found in Shewanella oneidensis (strain ATCC 700550 / JCM 31522 / CIP 106686 / LMG 19005 / NCIMB 14063 / MR-1).